A 60-amino-acid polypeptide reads, in one-letter code: Snake venom metalloproteinase bothrojaractivase (60 aa).

The region spanning 1-60 (RYIELAVVADHGMFTKYRVHELVNTVNGFFRSKQDLIKVQKDKTLTSFGEWRERDLLPRI) is the Peptidase M12B domain. Glu-4 contributes to the Ca(2+) binding site.

This sequence belongs to the venom metalloproteinase (M12B) family. P-I subfamily. Monomer. The cofactor is Zn(2+). Expressed by the venom gland.

It is found in the secreted. Its activity is regulated as follows. Completely inhibited by EDTA and EGTA. Partially inhibited by serine proteinase inhibitors PMSF and benzamidine. Not inhibited by cysteine proteinase inhibitors mercury ions and E-64. Is active without cofactors, although the presence of low concentrations of calcium and zinc ions enhanced its ability to convert prothrombin (F2) into active thrombin. Functionally, prothrombin (F2) activator that is cofactor-independent. Also has fibrinolytic and fibrinogenolytic activity. It degrades the Aalpha-chain and more slowly the Bbeta-chain of fibrin and fibrinogen, while the gamma-chain is only partially and slowly affected. A dose-dependent procoagulant activity is shown in human plasma. The polypeptide is Snake venom metalloproteinase bothrojaractivase (Bothrops jararaca (Jararaca)).